A 466-amino-acid polypeptide reads, in one-letter code: Adenosylhomocysteinase (466 aa).

Substrate is bound by residues Thr-57, Asp-132, and Glu-192. Position 193–195 (193–195) interacts with NAD(+); the sequence is TTT. Substrate contacts are provided by Lys-222 and Asp-226. Residues Asn-227, 256 to 261, Glu-279, Asn-314, 335 to 337, and Asn-380 each bind NAD(+); these read GYGDVG and IGH.

The protein belongs to the adenosylhomocysteinase family. It depends on NAD(+) as a cofactor.

The protein localises to the cytoplasm. It catalyses the reaction S-adenosyl-L-homocysteine + H2O = L-homocysteine + adenosine. Its pathway is amino-acid biosynthesis; L-homocysteine biosynthesis; L-homocysteine from S-adenosyl-L-homocysteine: step 1/1. Its function is as follows. May play a key role in the regulation of the intracellular concentration of adenosylhomocysteine. The protein is Adenosylhomocysteinase of Rhizobium meliloti (strain 1021) (Ensifer meliloti).